The chain runs to 89 residues: Cell division topological specificity factor (89 aa).

Belongs to the MinE family.

Prevents the cell division inhibition by proteins MinC and MinD at internal division sites while permitting inhibition at polar sites. This ensures cell division at the proper site by restricting the formation of a division septum at the midpoint of the long axis of the cell. This is Cell division topological specificity factor from Desulforudis audaxviator (strain MP104C).